The chain runs to 274 residues: Large ribosomal subunit protein uL2 (274 aa).

The tract at residues 223-274 (VAMNPVDHPHGGGEGRTSGGRHPVTPWGVPTKGYKTRSNKRTDKYIVRRRNK) is disordered.

It belongs to the universal ribosomal protein uL2 family. In terms of assembly, part of the 50S ribosomal subunit. Forms a bridge to the 30S subunit in the 70S ribosome.

In terms of biological role, one of the primary rRNA binding proteins. Required for association of the 30S and 50S subunits to form the 70S ribosome, for tRNA binding and peptide bond formation. It has been suggested to have peptidyltransferase activity; this is somewhat controversial. Makes several contacts with the 16S rRNA in the 70S ribosome. The protein is Large ribosomal subunit protein uL2 of Shewanella putrefaciens (strain CN-32 / ATCC BAA-453).